Reading from the N-terminus, the 194-residue chain is ATP-dependent Clp protease proteolytic subunit (194 aa).

The active-site Nucleophile is S98. Residue H123 is part of the active site.

This sequence belongs to the peptidase S14 family. As to quaternary structure, fourteen ClpP subunits assemble into 2 heptameric rings which stack back to back to give a disk-like structure with a central cavity, resembling the structure of eukaryotic proteasomes.

The protein localises to the cytoplasm. The catalysed reaction is Hydrolysis of proteins to small peptides in the presence of ATP and magnesium. alpha-casein is the usual test substrate. In the absence of ATP, only oligopeptides shorter than five residues are hydrolyzed (such as succinyl-Leu-Tyr-|-NHMec, and Leu-Tyr-Leu-|-Tyr-Trp, in which cleavage of the -Tyr-|-Leu- and -Tyr-|-Trp bonds also occurs).. Its function is as follows. Cleaves peptides in various proteins in a process that requires ATP hydrolysis. Has a chymotrypsin-like activity. Plays a major role in the degradation of misfolded proteins. The chain is ATP-dependent Clp protease proteolytic subunit from Acetivibrio thermocellus (strain ATCC 27405 / DSM 1237 / JCM 9322 / NBRC 103400 / NCIMB 10682 / NRRL B-4536 / VPI 7372) (Clostridium thermocellum).